A 335-amino-acid chain; its full sequence is Vitamin B12 import system permease protein BtuC (335 aa).

The next 9 membrane-spanning stretches (helical) occupy residues 25 to 45, 67 to 87, 95 to 114, 118 to 140, 153 to 173, 200 to 220, 243 to 263, 286 to 306, and 308 to 328; these read LVVI…IWLW, LAVL…QALF, GLLG…VLLG, LPIW…LLLG, LLVG…AVYF, LVLA…VLNF, VLAI…ISFI, CALA…IALF, and AELP…IWLL.

Belongs to the binding-protein-dependent transport system permease family. FecCD subfamily. In terms of assembly, the complex is composed of two ATP-binding proteins (BtuD), two transmembrane proteins (BtuC) and a solute-binding protein (BtuF).

It is found in the cell inner membrane. Its function is as follows. Part of the ABC transporter complex BtuCDF involved in vitamin B12 import. Involved in the translocation of the substrate across the membrane. This is Vitamin B12 import system permease protein BtuC from Yersinia enterocolitica serotype O:8 / biotype 1B (strain NCTC 13174 / 8081).